The following is a 204-amino-acid chain: MDQNANQPRQERPSVRLEKLQHWARHKQSGRLLVLAVSQVWLAIAMVPFTISVSCLTSACHLVTALPLWPGASGLLTGIITLELRRAPCIWKVRAMMISNTFNLILGFVAVVIEVMKTALGTASMDSSQSTGLLVLELSAEAFTLAGVLVSTYALFLLSQRKPGYFKRSRLQYRELQEGLSEMEEVSGLENGPVVASTGNRTDE.

The next 4 helical transmembrane spans lie at 33 to 53 (LVLA…TISV), 62 to 82 (LVTA…IITL), 96 to 116 (MMIS…IEVM), and 138 to 158 (LSAE…LFLL). A disordered region spans residues 184-204 (EEVSGLENGPVVASTGNRTDE).

The protein localises to the membrane. This is Transmembrane protein 253 (Tmem253) from Mus musculus (Mouse).